Here is a 152-residue protein sequence, read N- to C-terminus: Large ribosomal subunit protein bL9 (152 aa).

Belongs to the bacterial ribosomal protein bL9 family.

Functionally, binds to the 23S rRNA. The sequence is that of Large ribosomal subunit protein bL9 from Synechococcus sp. (strain CC9902).